The chain runs to 598 residues: Chromodomain Y-like protein (598 aa).

The segment at 1 to 76 (MTFQASHRSA…VDKRKNKKGK (76 aa)) is disordered. The span at 44-56 (PSISVSSEQSGAQ) shows a compositional bias: polar residues. The region spanning 61–121 (LQVERIVDKR…RHTEKQKEST (61 aa)) is the Chromo domain. An interaction with EZH2 region spans residues 61–309 (LQVERIVDKR…NIQTSVTGVT (249 aa)). Over residues 65 to 76 (RIVDKRKNKKGK) the composition is skewed to basic and acidic residues. Serine 88 is subject to Phosphoserine. Positions 112 to 121 (RHTEKQKEST) are enriched in basic and acidic residues. Residues 112-149 (RHTEKQKESTLTRTNRTSPNNARKQISRSTNSNFSKTS) form a disordered region. Residues 122–149 (LTRTNRTSPNNARKQISRSTNSNFSKTS) show a composition bias toward polar residues. An N6,N6,N6-trimethyllysine; by EHMT2; alternate modification is found at lysine 135. Lysine 135 bears the N6,N6-dimethyllysine; by EHMT2; alternate mark. Lysine 135 is subject to N6-methyllysine; by EHMT2; alternate. A phosphoserine mark is found at serine 170, serine 201, and serine 216. The segment at 204 to 226 (KSRTAVDGFQSESPEKLDPVEQG) is disordered. Positions 362-594 (SENNSLNPEV…DSMLKYLQRK (233 aa)) are acetyl-CoA-binding domain.

As to quaternary structure, forms multimers and multimerization is required for stable binding to chromatin. Interacts with HDAC1 and HDAC2 via its C-terminal acetyl-CoA-binding domain. Interacts with EZH2, EED, SUZ12, REST, EHMT1 and EHMT2. Part of a complex containing at least CDYL, REST, WIZ, SETB1, EHMT1 and EHMT2. Part of a complex containing at least CDYL, MIER1, MIER2, HDAC1 and HDAC2. Interacts with CHAF1A and CHAF1B; bridging the CAF-1 complex to the MCM2-7 (MCM) complex. Interacts with MCM3 and MCM5; bridging the CAF-1 complex to the MCM2-7 (MCM) complex. Recruited to Xist RNA-coated X chromosome. Interacts with EHMT2 and PRDM9; interaction only takes place when PRDM9 is bound to hotspot DNA. Expressed in the hippocampus with reduced expression in epileptic tissue compared to normal adjacent tissue (at protein level). Ubiquitous. Expressed at moderate levels in all tissues examined. Isoform 2: Most abundantly expressed isoform.

It localises to the nucleus. The protein resides in the chromosome. It catalyses the reaction 3-hydroxybutanoyl-CoA = (2E)-butenoyl-CoA + H2O. In terms of biological role, chromatin reader protein that recognizes and binds histone H3 trimethylated at 'Lys-9', dimethylated at 'Lys-27' and trimethylated at 'Lys-27' (H3K9me3, H3K27me2 and H3K27me3, respectively). Part of multimeric repressive chromatin complexes, where it is required for transmission and restoration of repressive histone marks, thereby preserving the epigenetic landscape. Required for chromatin targeting and maximal enzymatic activity of Polycomb repressive complex 2 (PRC2); acts as a positive regulator of PRC2 activity by bridging the pre-existing histone H3K27me3 and newly recruited PRC2 on neighboring nucleosomes. Acts as a corepressor for REST by facilitating histone-lysine N-methyltransferase EHMT2 recruitment and H3K9 dimethylation at REST target genes for repression. Involved in X chromosome inactivation in females: recruited to Xist RNA-coated X chromosome and facilitates propagation of H3K9me2 by anchoring EHMT2. Promotes EZH2 accumulation and H3K27me3 methylation at DNA double strand breaks (DSBs), thereby facilitating transcriptional repression at sites of DNA damage and homology-directed repair of DSBs. Required for neuronal migration during brain development by repressing expression of RHOA. By repressing the expression of SCN8A, contributes to the inhibition of intrinsic neuronal excitability and epileptogenesis. In addition to acting as a chromatin reader, acts as a hydro-lyase. Shows crotonyl-coA hydratase activity by mediating the conversion of crotonyl-CoA ((2E)-butenoyl-CoA) to beta-hydroxybutyryl-CoA (3-hydroxybutanoyl-CoA), thereby acting as a negative regulator of histone crotonylation. Histone crotonylation is required during spermatogenesis; down-regulation of histone crotonylation by CDYL regulates the reactivation of sex chromosome-linked genes in round spermatids and histone replacement in elongating spermatids. By regulating histone crotonylation and trimethylation of H3K27, may be involved in stress-induced depression-like behaviors, possibly by regulating VGF expression. Its function is as follows. Not able to recognize and bind histone H3K9me3, histone H3K27me2 and histone H3K27me3, due to the presence of a N-terminal extension that inactivates the chromo domain. Not able to recognize and bind histone H3K9me3, histone H3K27me2 and histone H3K27me3, due to the absence of the chromo domain. Acts as a negative regulator of isoform 2 by displacing isoform 2 from chromatin. The polypeptide is Chromodomain Y-like protein (Homo sapiens (Human)).